The chain runs to 245 residues: U21-ctenitoxin-Pn1a (245 aa).

Residues 1–245 (IVYGTVTTPG…FRSWMDKVMT (245 aa)) enclose the Peptidase S1 domain. Residues Cys30 and Cys46 are joined by a disulfide bond. Residues His45 and Asp95 each act as charge relay system in the active site. Cystine bridges form between Cys161-Cys183 and Cys192-Cys221. Ser196 serves as the catalytic Charge relay system.

In terms of tissue distribution, expressed by the venom gland.

It is found in the secreted. Functionally, protease. Hydrolyzes gelatin and succinyl casein. This is U21-ctenitoxin-Pn1a from Phoneutria nigriventer (Brazilian armed spider).